The following is a 294-amino-acid chain: Ribosomal RNA small subunit methyltransferase A (294 aa).

S-adenosyl-L-methionine-binding residues include N31, L33, G58, E79, D111, and N136.

It belongs to the class I-like SAM-binding methyltransferase superfamily. rRNA adenine N(6)-methyltransferase family. RsmA subfamily.

The protein resides in the cytoplasm. The catalysed reaction is adenosine(1518)/adenosine(1519) in 16S rRNA + 4 S-adenosyl-L-methionine = N(6)-dimethyladenosine(1518)/N(6)-dimethyladenosine(1519) in 16S rRNA + 4 S-adenosyl-L-homocysteine + 4 H(+). Functionally, specifically dimethylates two adjacent adenosines (A1518 and A1519) in the loop of a conserved hairpin near the 3'-end of 16S rRNA in the 30S particle. May play a critical role in biogenesis of 30S subunits. The sequence is that of Ribosomal RNA small subunit methyltransferase A from Lactobacillus helveticus (strain DPC 4571).